We begin with the raw amino-acid sequence, 926 residues long: Transcriptional activator protein acu-15 (926 aa).

A DNA-binding region (zn(2)-C6 fungal-type) is located at residues 24 to 51; it reads CDRCRSKKIRCDGIRPCCSQCANVGFEC. Disordered stretches follow at residues 100–129, 602–649, and 667–801; these read KMHSNRSRSAEPPRSTPAAEIKRDSGTPAK, LPQS…SASL, and TPQH…TSTG. Residues 119-129 show a composition bias toward basic and acidic residues; that stretch reads EIKRDSGTPAK. Low complexity-rich tracts occupy residues 623 to 632 and 669 to 681; these read AQQGSPSPSA and QHQQYQHQQLQQQ. Composition is skewed to polar residues over residues 689 to 703 and 726 to 736; these read ARSQTSFDNLRQKAQ and RTSTGTQSTPN. Residues 740-792 are compositionally biased toward low complexity; sequence LSLSSPQSPVSPVQMRSQPHQLQQQQQQQPQPQQQQQQHQRSSIASSHSQQGQ.

Its subcellular location is the nucleus. Its function is as follows. Positive regulator of acetate induction. In Neurospora crassa (strain ATCC 24698 / 74-OR23-1A / CBS 708.71 / DSM 1257 / FGSC 987), this protein is Transcriptional activator protein acu-15 (acu-15).